The sequence spans 478 residues: ATP-dependent RNA helicase DDX19A (478 aa).

Alanine 2 carries the post-translational modification N-acetylalanine. The tract at residues 2-299 is N-terminal lobe; that stretch reads ATDSWALAVD…DPNIIKLKRE (298 aa). Lysine 26 participates in a covalent cross-link: Glycyl lysine isopeptide (Lys-Gly) (interchain with G-Cter in SUMO1); alternate. Residue lysine 26 forms a Glycyl lysine isopeptide (Lys-Gly) (interchain with G-Cter in SUMO2); alternate linkage. A disordered region spans residues 31-55; the sequence is KPDTNGVIKTNATPEKTDEEEKEDR. Residues 54–67 are N-terminal helix; sequence DRAAQSLLNKLIRS. A Q motif motif is present at residues 91–119; the sequence is KSFEELRLKPQLLQGVYAMGFNRPSKIQE. ATP is bound by residues glutamine 118 and 137–144; that span reads SQSGTGKT. One can recognise a Helicase ATP-binding domain in the interval 124 to 294; that stretch reads MMLAEPPQNL…QKVVPDPNII (171 aa). Positions 241–244 match the DEAD box motif; sequence DEAD. A C-terminal lobe region spans residues 300–478; it reads EETLDTIKQY…DLDEIEKIAN (179 aa). A Helicase C-terminal domain is found at 305 to 473; it reads TIKQYYVLCN…RLDTDDLDEI (169 aa). Residues arginine 428 and arginine 431 each contribute to the ATP site.

This sequence belongs to the DEAD box helicase family. DDX19/DBP5 subfamily.

It localises to the cytoplasm. Its subcellular location is the nucleus. It is found in the nucleoplasm. The enzyme catalyses ATP + H2O = ADP + phosphate + H(+). Its function is as follows. ATP-dependent RNA helicase involved in mRNA export from the nucleus. Rather than unwinding RNA duplexes, DDX19 functions as a remodeler of ribonucleoprotein particles, whereby proteins bound to nuclear mRNA are dissociated and replaced by cytoplasmic mRNA binding proteins. The protein is ATP-dependent RNA helicase DDX19A (DDX19A) of Bos taurus (Bovine).